The following is a 94-amino-acid chain: Aspartyl/glutamyl-tRNA(Asn/Gln) amidotransferase subunit C (94 aa).

Belongs to the GatC family. Heterotrimer of A, B and C subunits.

It catalyses the reaction L-glutamyl-tRNA(Gln) + L-glutamine + ATP + H2O = L-glutaminyl-tRNA(Gln) + L-glutamate + ADP + phosphate + H(+). It carries out the reaction L-aspartyl-tRNA(Asn) + L-glutamine + ATP + H2O = L-asparaginyl-tRNA(Asn) + L-glutamate + ADP + phosphate + 2 H(+). In terms of biological role, allows the formation of correctly charged Asn-tRNA(Asn) or Gln-tRNA(Gln) through the transamidation of misacylated Asp-tRNA(Asn) or Glu-tRNA(Gln) in organisms which lack either or both of asparaginyl-tRNA or glutaminyl-tRNA synthetases. The reaction takes place in the presence of glutamine and ATP through an activated phospho-Asp-tRNA(Asn) or phospho-Glu-tRNA(Gln). This Desulfitobacterium hafniense (strain DSM 10664 / DCB-2) protein is Aspartyl/glutamyl-tRNA(Asn/Gln) amidotransferase subunit C.